The chain runs to 205 residues: ATP phosphoribosyltransferase (205 aa).

It belongs to the ATP phosphoribosyltransferase family. Short subfamily. Heteromultimer composed of HisG and HisZ subunits.

The protein localises to the cytoplasm. It carries out the reaction 1-(5-phospho-beta-D-ribosyl)-ATP + diphosphate = 5-phospho-alpha-D-ribose 1-diphosphate + ATP. Its pathway is amino-acid biosynthesis; L-histidine biosynthesis; L-histidine from 5-phospho-alpha-D-ribose 1-diphosphate: step 1/9. In terms of biological role, catalyzes the condensation of ATP and 5-phosphoribose 1-diphosphate to form N'-(5'-phosphoribosyl)-ATP (PR-ATP). Has a crucial role in the pathway because the rate of histidine biosynthesis seems to be controlled primarily by regulation of HisG enzymatic activity. The sequence is that of ATP phosphoribosyltransferase from Ruthia magnifica subsp. Calyptogena magnifica.